We begin with the raw amino-acid sequence, 274 residues long: Diaminopimelate epimerase (274 aa).

Substrate contacts are provided by Asn-11, Gln-44, and Asn-64. Cys-73 functions as the Proton donor in the catalytic mechanism. Substrate-binding positions include 74–75 (GN), Asn-157, Asn-190, and 208–209 (ER). Cys-217 serves as the catalytic Proton acceptor. Residue 218–219 (GT) coordinates substrate.

This sequence belongs to the diaminopimelate epimerase family. Homodimer.

It localises to the cytoplasm. The catalysed reaction is (2S,6S)-2,6-diaminopimelate = meso-2,6-diaminopimelate. It participates in amino-acid biosynthesis; L-lysine biosynthesis via DAP pathway; DL-2,6-diaminopimelate from LL-2,6-diaminopimelate: step 1/1. In terms of biological role, catalyzes the stereoinversion of LL-2,6-diaminopimelate (L,L-DAP) to meso-diaminopimelate (meso-DAP), a precursor of L-lysine and an essential component of the bacterial peptidoglycan. The sequence is that of Diaminopimelate epimerase from Blochmanniella pennsylvanica (strain BPEN).